Reading from the N-terminus, the 356-residue chain is Chorismate synthase (356 aa).

NADP(+)-binding residues include Arg-44 and Arg-49. Residues 121 to 123, Gly-278, 293 to 297, and Arg-320 contribute to the FMN site; these read HFS and KPTPS.

This sequence belongs to the chorismate synthase family. It depends on FMNH2 as a cofactor.

It catalyses the reaction 5-O-(1-carboxyvinyl)-3-phosphoshikimate = chorismate + phosphate. It functions in the pathway metabolic intermediate biosynthesis; chorismate biosynthesis; chorismate from D-erythrose 4-phosphate and phosphoenolpyruvate: step 7/7. In terms of biological role, catalyzes the anti-1,4-elimination of the C-3 phosphate and the C-6 proR hydrogen from 5-enolpyruvylshikimate-3-phosphate (EPSP) to yield chorismate, which is the branch point compound that serves as the starting substrate for the three terminal pathways of aromatic amino acid biosynthesis. This reaction introduces a second double bond into the aromatic ring system. The protein is Chorismate synthase of Thermococcus gammatolerans (strain DSM 15229 / JCM 11827 / EJ3).